Here is a 943-residue protein sequence, read N- to C-terminus: Zinc finger BED domain-containing protein 39 (943 aa).

Positions 1–99 are disordered; it reads MSSVSSDIDG…DIAMDVSGST (99 aa). Positions 12-21 are enriched in basic and acidic residues; that stretch reads PETKRFRIDV. Residues 50–72 are compositionally biased toward low complexity; that stretch reads SPAAPSSASYRSSNSSVISSSES. Over residues 73 to 85 the composition is skewed to basic and acidic residues; sequence PIKDEDVDVHDGQ. Residues 184–235 form a BED-type; degenerate zinc finger; the sequence is NKQTPVWKYFVYNKTENLSRCIVGDCTYMLKGPHTSTLACHLKKHTREYSEF. 2 disordered regions span residues 242–315 and 328–348; these read YSRT…KEPS and RQAT…PQLP. Over residues 262–276 the composition is skewed to polar residues; it reads TLQTQNTPRQTGSPA. The segment covering 277–292 has biased composition (low complexity); the sequence is STCNTNSNTSSSVSSG. Positions 328-338 are enriched in polar residues; sequence RQATNNSNGSP.

As to expression, expressed in distal tip cells and in germline cells.

The protein resides in the nucleus. It is found in the cytoplasm. Its function is as follows. Regulates the timing and orientation of distal tip cell migration during gonadal development. May act in parallel to cacn-1 and Rac GTPases to control the anterior and posterior migration of distal tip cells. This chain is Zinc finger BED domain-containing protein 39, found in Caenorhabditis elegans.